Consider the following 284-residue polypeptide: RNase adapter protein RapZ (284 aa).

8–15 is a binding site for ATP; it reads GRSGSGKS. GTP is bound at residue 56 to 59; that stretch reads DVRN. Positions 266–284 are RNA-binding; sequence RSRGKNVQSRHRTLEKRKP.

Belongs to the RapZ-like family. RapZ subfamily. Homotrimer.

Its function is as follows. Modulates the synthesis of GlmS, by affecting the processing and stability of the regulatory small RNA GlmZ. When glucosamine-6-phosphate (GlcN6P) concentrations are high in the cell, RapZ binds GlmZ and targets it to cleavage by RNase E. Consequently, GlmZ is inactivated and unable to activate GlmS synthesis. Under low GlcN6P concentrations, RapZ is sequestered and inactivated by an other regulatory small RNA, GlmY, preventing GlmZ degradation and leading to synthesis of GlmS. The chain is RNase adapter protein RapZ from Escherichia coli O1:K1 / APEC.